An 85-amino-acid polypeptide reads, in one-letter code: uncharacterized protein (85 aa).

This is an uncharacterized protein from Enterobacteria phage T3 (Bacteriophage T3).